The chain runs to 192 residues: Xanthine phosphoribosyltransferase 2 (192 aa).

Residues leucine 20 and asparagine 27 each contribute to the xanthine site. 131–135 (ANACA) is a binding site for 5-phospho-alpha-D-ribose 1-diphosphate. Lysine 159 provides a ligand contact to xanthine.

This sequence belongs to the purine/pyrimidine phosphoribosyltransferase family. Xpt subfamily. As to quaternary structure, homodimer.

It is found in the cytoplasm. The catalysed reaction is XMP + diphosphate = xanthine + 5-phospho-alpha-D-ribose 1-diphosphate. Its pathway is purine metabolism; XMP biosynthesis via salvage pathway; XMP from xanthine: step 1/1. Its function is as follows. Converts the preformed base xanthine, a product of nucleic acid breakdown, to xanthosine 5'-monophosphate (XMP), so it can be reused for RNA or DNA synthesis. The polypeptide is Xanthine phosphoribosyltransferase 2 (Clostridium perfringens (strain ATCC 13124 / DSM 756 / JCM 1290 / NCIMB 6125 / NCTC 8237 / Type A)).